We begin with the raw amino-acid sequence, 330 residues long: Ketol-acid reductoisomerase (NADP(+)) (330 aa).

One can recognise a KARI N-terminal Rossmann domain in the interval 3–184; sequence LPVYYDKDID…GGGRMGVLET (182 aa). NADP(+) contacts are provided by residues 26–29, Ser-52, and Ser-54; that span reads YGVQ. The active site involves His-109. An NADP(+)-binding site is contributed by Gly-135. The KARI C-terminal knotted domain maps to 185–329; that stretch reads SFKEECESDL…EILRAPFNHK (145 aa). Asp-193, Glu-197, Glu-229, and Glu-233 together coordinate Mg(2+). Ser-254 contacts substrate.

Belongs to the ketol-acid reductoisomerase family. The cofactor is Mg(2+).

It carries out the reaction (2R)-2,3-dihydroxy-3-methylbutanoate + NADP(+) = (2S)-2-acetolactate + NADPH + H(+). The catalysed reaction is (2R,3R)-2,3-dihydroxy-3-methylpentanoate + NADP(+) = (S)-2-ethyl-2-hydroxy-3-oxobutanoate + NADPH + H(+). The protein operates within amino-acid biosynthesis; L-isoleucine biosynthesis; L-isoleucine from 2-oxobutanoate: step 2/4. It participates in amino-acid biosynthesis; L-valine biosynthesis; L-valine from pyruvate: step 2/4. Its function is as follows. Involved in the biosynthesis of branched-chain amino acids (BCAA). Catalyzes an alkyl-migration followed by a ketol-acid reduction of (S)-2-acetolactate (S2AL) to yield (R)-2,3-dihydroxy-isovalerate. In the isomerase reaction, S2AL is rearranged via a Mg-dependent methyl migration to produce 3-hydroxy-3-methyl-2-ketobutyrate (HMKB). In the reductase reaction, this 2-ketoacid undergoes a metal-dependent reduction by NADPH to yield (R)-2,3-dihydroxy-isovalerate. The sequence is that of Ketol-acid reductoisomerase (NADP(+)) from Helicobacter pylori (strain J99 / ATCC 700824) (Campylobacter pylori J99).